The chain runs to 385 residues: 1-deoxy-D-xylulose 5-phosphate reductoisomerase (385 aa).

The NADPH site is built by Thr-13, Gly-14, Ser-15, Ile-16, Asn-40, and Asn-122. A 1-deoxy-D-xylulose 5-phosphate-binding site is contributed by Lys-123. Position 124 (Glu-124) interacts with NADPH. Position 148 (Asp-148) interacts with Mn(2+). Residues Ser-149, Glu-150, Ser-177, and His-200 each coordinate 1-deoxy-D-xylulose 5-phosphate. Glu-150 serves as a coordination point for Mn(2+). Gly-206 provides a ligand contact to NADPH. 1-deoxy-D-xylulose 5-phosphate contacts are provided by Ser-213, Asn-218, Lys-219, and Glu-222. Glu-222 contacts Mn(2+).

It belongs to the DXR family. Requires Mg(2+) as cofactor. Mn(2+) serves as cofactor.

It carries out the reaction 2-C-methyl-D-erythritol 4-phosphate + NADP(+) = 1-deoxy-D-xylulose 5-phosphate + NADPH + H(+). The protein operates within isoprenoid biosynthesis; isopentenyl diphosphate biosynthesis via DXP pathway; isopentenyl diphosphate from 1-deoxy-D-xylulose 5-phosphate: step 1/6. Its function is as follows. Catalyzes the NADPH-dependent rearrangement and reduction of 1-deoxy-D-xylulose-5-phosphate (DXP) to 2-C-methyl-D-erythritol 4-phosphate (MEP). The chain is 1-deoxy-D-xylulose 5-phosphate reductoisomerase from Francisella tularensis subsp. tularensis (strain WY96-3418).